The sequence spans 51 residues: uncharacterized protein (51 aa).

This is an uncharacterized protein from Rickettsia conorii (strain ATCC VR-613 / Malish 7).